The chain runs to 329 residues: Quinate dehydrogenase (329 aa).

The catalysed reaction is L-quinate + NAD(+) = 3-dehydroquinate + NADH + H(+). Its pathway is aromatic compound metabolism; 3,4-dihydroxybenzoate biosynthesis; 3-dehydroquinate from D-quinate (NAD(+) route): step 1/1. This Emericella nidulans (strain FGSC A4 / ATCC 38163 / CBS 112.46 / NRRL 194 / M139) (Aspergillus nidulans) protein is Quinate dehydrogenase (qutB).